Here is a 321-residue protein sequence, read N- to C-terminus: Glucokinase (321 aa).

8–13 (GDVGGT) contacts ATP.

The protein belongs to the bacterial glucokinase family.

The protein resides in the cytoplasm. The enzyme catalyses D-glucose + ATP = D-glucose 6-phosphate + ADP + H(+). The polypeptide is Glucokinase (Salmonella schwarzengrund (strain CVM19633)).